The following is a 169-amino-acid chain: Peptide deformylase 1 (169 aa).

Residues C91 and H133 each coordinate Fe cation. E134 is an active-site residue. Residue H137 coordinates Fe cation.

This sequence belongs to the polypeptide deformylase family. Requires Fe(2+) as cofactor.

The enzyme catalyses N-terminal N-formyl-L-methionyl-[peptide] + H2O = N-terminal L-methionyl-[peptide] + formate. In terms of biological role, removes the formyl group from the N-terminal Met of newly synthesized proteins. Requires at least a dipeptide for an efficient rate of reaction. N-terminal L-methionine is a prerequisite for activity but the enzyme has broad specificity at other positions. This is Peptide deformylase 1 from Vibrio cholerae serotype O1 (strain ATCC 39315 / El Tor Inaba N16961).